A 789-amino-acid chain; its full sequence is Transducer protein Htr6 (789 aa).

Transmembrane regions (helical) follow at residues 29-49 and 294-314; these read FAVA…FAFQ and TVTV…IALG. HAMP domains follow at residues 315–367 and 409–462; these read RHTV…DRIQ and ERLQ…ATIA. The 237-residue stretch at 481 to 717 folds into the Methyl-accepting transducer domain; the sequence is GAEEIETTSQ…SVVRRVDDVA (237 aa). Residues 763-789 form a disordered region; that stretch reads NQFETRADADEPDADTTVDASADDTGD. Over residues 772–789 the composition is skewed to acidic residues; sequence DEPDADTTVDASADDTGD.

The protein belongs to the methyl-accepting chemotaxis (MCP) protein family. Methylated by CheR.

It localises to the cell membrane. Functionally, potentially involved in chemo- or phototactic signal transduction. This chain is Transducer protein Htr6 (htr6), found in Halobacterium salinarum (strain ATCC 29341 / DSM 671 / R1).